The sequence spans 201 residues: Desiccation-related protein PCC3-06 (201 aa).

The span at 41 to 54 (TVASQSQGRQQVSE) shows a compositional bias: polar residues. 2 disordered regions span residues 41 to 155 (TVAS…QNVK) and 177 to 201 (MGKSEEVKNQAEHETKKRSTSTNYF). Basic and acidic residues-rich tracts occupy residues 57 to 76 (EDAKKKFSETTDSLKHKTSE), 108 to 144 (GELKDKTQEGAENVREKAMDAGNDAMEKTRNAGERVA), and 177 to 193 (MGKSEEVKNQAEHETKK).

Belongs to the LEA type 1 family.

The sequence is that of Desiccation-related protein PCC3-06 from Craterostigma plantagineum (Blue gem).